The primary structure comprises 327 residues: 3' cyclic ADP-D-ribose synthase AaTIR (327 aa).

A TIR domain region spans residues 10 to 120 (VALSFAGENR…GILKTIGYIN (111 aa)). Residue Lys-229 is part of the active site.

As to quaternary structure, homodimer.

It carries out the reaction NADP(+) + H2O = ADP-D-ribose 2'-phosphate + nicotinamide + H(+). The enzyme catalyses NAD(+) = 3'cADPR + nicotinamide + H(+). Its function is as follows. NAD(+) hydrolase (NADase) that generates 3'cADPR, a cyclization variant of cyclic ADP-D-ribose (also called v2-cADPR). Also cleaves NADP(+), but does not cyclize the product. This is 3' cyclic ADP-D-ribose synthase AaTIR from Aquimarina amphilecti.